The chain runs to 393 residues: Protein TsgA (393 aa).

Helical transmembrane passes span 11 to 31 (WISF…GMVM), 51 to 71 (FLNA…EIVP), 78 to 98 (FGFL…SLAL), 101 to 121 (AAMF…TFLV), 134 to 154 (LLFT…IAAF), 162 to 182 (WYWV…LTFG), 206 to 226 (IGVL…LGFI), 245 to 265 (TLVS…SFIL), 273 to 293 (ILTV…TGTP), 297 to 317 (AWSI…IITL), 332 to 352 (FVLT…GPIV), and 361 to 381 (LLTA…LGFV).

This sequence belongs to the major facilitator superfamily. TsgA family.

It is found in the cell inner membrane. In Escherichia coli O139:H28 (strain E24377A / ETEC), this protein is Protein TsgA.